The sequence spans 339 residues: Transcription initiation factor IIB (339 aa).

Residues 39–70 (EELICPVCGSKSIIKDYERAEIVCEMCGCVLQ) form a TFIIB-type zinc finger. 4 residues coordinate Zn(2+): C43, C46, C62, and C65. Repeat copies occupy residues 156–239 (SELD…SREL) and 250–331 (DYVP…ELTE).

This sequence belongs to the TFIIB family.

Stabilizes TBP binding to an archaeal box-A promoter. Also responsible for recruiting RNA polymerase II to the pre-initiation complex (DNA-TBP-TFIIB). The protein is Transcription initiation factor IIB of Methanococcus maripaludis (strain C5 / ATCC BAA-1333).